A 426-amino-acid chain; its full sequence is Gamma-glutamyl phosphate reductase (426 aa).

Belongs to the gamma-glutamyl phosphate reductase family.

The protein localises to the cytoplasm. It carries out the reaction L-glutamate 5-semialdehyde + phosphate + NADP(+) = L-glutamyl 5-phosphate + NADPH + H(+). It participates in amino-acid biosynthesis; L-proline biosynthesis; L-glutamate 5-semialdehyde from L-glutamate: step 2/2. Catalyzes the NADPH-dependent reduction of L-glutamate 5-phosphate into L-glutamate 5-semialdehyde and phosphate. The product spontaneously undergoes cyclization to form 1-pyrroline-5-carboxylate. The chain is Gamma-glutamyl phosphate reductase from Cupriavidus necator (strain ATCC 17699 / DSM 428 / KCTC 22496 / NCIMB 10442 / H16 / Stanier 337) (Ralstonia eutropha).